The sequence spans 701 residues: Phytyl ester synthase 2, chloroplastic (701 aa).

Residues 1 to 65 (MAVTVLPSVS…KNNDENRATV (65 aa)) constitute a chloroplast transit peptide. Residues 37 to 64 (SVTSTSSPPTPSSGVQRRRKNNDENRAT) form a disordered region.

It belongs to the diacylglycerol acyltransferase family.

It localises to the plastid. The protein localises to the chloroplast. It is found in the plastoglobule. It carries out the reaction a 1,2-diacyl-3-O-(beta-D-galactosyl)-sn-glycerol + a 1,2-diacylglycerol = an acyl-3-O-(beta-D-galactosyl)-sn-glycerol + a triacylglycerol. It catalyses the reaction a 1,2-diacylglycerol + a fatty acyl-CoA = a triacylglycerol + CoA. The catalysed reaction is a fatty acyl-[ACP] + a 1,2-diacylglycerol = a triacylglycerol + holo-[ACP]. The enzyme catalyses phytol + a fatty acyl-CoA = a fatty acid phytyl ester + CoA. It carries out the reaction phytol + tetradecanoyl-CoA = tetradecanoate phytyl ester + CoA. It catalyses the reaction a 1,3-diacylglycerol + a fatty acyl-CoA = a triacylglycerol + CoA. The catalysed reaction is 1,2-dihexanoylglycerol + tetradecanoyl-CoA = 1,2-dihexanoyl-3-tetradecanoylglycerol + CoA. The enzyme catalyses 1,2-dihexanoylglycerol + hexadecanoyl-CoA = 1,2-dihexanoyl-3-hexadecanoylglycerol + CoA. It carries out the reaction 1,2-dihexanoylglycerol + octadecanoyl-CoA = 1,2-dihexanoyl-3-octadecanoylglycerol + CoA. It catalyses the reaction (7Z,10Z,13Z)-hexadecatrienoyl-CoA + 1,2-dihexanoylglycerol = 1,2-dihexanoyl-3-(7Z,10Z,13Z-hexadecatrienoyl)-glycerol + CoA. The catalysed reaction is 1,2-dihexanoylglycerol + (9Z)-octadecenoyl-CoA = 1,2-dihexanoyl-3-(9Z-octadecenoyl)-glycerol + CoA. The enzyme catalyses 1,2-dihexanoylglycerol + (9Z,12Z,15Z)-octadecatrienoyl-CoA = 1,2-dihexanoyl-3-(9Z,12Z,15Z-octadecatrienoyl)-glycerol + CoA. It carries out the reaction phytol + decanoyl-CoA = decanoate phytyl ester + CoA. It catalyses the reaction (7Z,10Z,13Z)-hexadecatrienoyl-CoA + phytol = (7Z,10Z,13Z)-hexadecatrienoate phytyl ester + CoA. The catalysed reaction is phytol + dodecanoyl-CoA = dodecanoate phytyl ester + CoA. In terms of biological role, acyltransferase involved in fatty acid phytyl ester synthesis in chloroplasts, a process required for the maintenance of the photosynthetic membrane integrity during abiotic stress and senescence. Exhibits phytyl ester synthesis and diacylglycerol acyltransferase activities with broad substrate specificities, and can employ acyl-CoAs, acyl carrier proteins, and galactolipids as acyl donors. The chain is Phytyl ester synthase 2, chloroplastic from Arabidopsis thaliana (Mouse-ear cress).